The primary structure comprises 430 residues: Adenylosuccinate synthetase (430 aa).

GTP contacts are provided by residues 12–18 and 40–42; these read GDEGKGK and GHT. Catalysis depends on D13, which acts as the Proton acceptor. Mg(2+)-binding residues include D13 and G40. IMP is bound by residues 13-16, 38-41, T130, R144, Q224, and T239; these read DEGK and NAGH. The Proton donor role is filled by H41. Residues 277-297 are disordered; the sequence is PFPTEQDNETGRKIGERGREF. The span at 285–296 shows a compositional bias: basic and acidic residues; sequence ETGRKIGERGRE. 299–305 is a binding site for substrate; sequence TNTGRPR. R303 provides a ligand contact to IMP. Residues R305, 331–333, and 413–415 each bind GTP; these read KLD and STS.

The protein belongs to the adenylosuccinate synthetase family. Homodimer. Requires Mg(2+) as cofactor.

The protein resides in the cytoplasm. It catalyses the reaction IMP + L-aspartate + GTP = N(6)-(1,2-dicarboxyethyl)-AMP + GDP + phosphate + 2 H(+). It functions in the pathway purine metabolism; AMP biosynthesis via de novo pathway; AMP from IMP: step 1/2. In terms of biological role, plays an important role in the de novo pathway of purine nucleotide biosynthesis. Catalyzes the first committed step in the biosynthesis of AMP from IMP. This chain is Adenylosuccinate synthetase, found in Bradyrhizobium sp. (strain ORS 278).